The following is a 431-amino-acid chain: Glucose-1-phosphate adenylyltransferase (431 aa).

Lys-39 is a binding site for beta-D-fructose 1,6-bisphosphate. Positions 40, 46, and 52 each coordinate AMP. Tyr-114 contacts alpha-D-glucose 1-phosphate. Arg-130 lines the AMP pocket. Alpha-D-glucose 1-phosphate contacts are provided by residues Gly-179, Glu-194–Lys-195, and Ser-212. AMP is bound by residues Glu-370 and Arg-386. Beta-D-fructose 1,6-bisphosphate is bound by residues Arg-419 to Arg-423 and Gln-429 to Arg-431.

The protein belongs to the bacterial/plant glucose-1-phosphate adenylyltransferase family. As to quaternary structure, homotetramer.

It carries out the reaction alpha-D-glucose 1-phosphate + ATP + H(+) = ADP-alpha-D-glucose + diphosphate. It functions in the pathway glycan biosynthesis; glycogen biosynthesis. With respect to regulation, allosterically activated by fructose-1,6-bisphosphate (F16BP) and inhibited by AMP. In terms of biological role, involved in the biosynthesis of ADP-glucose, a building block required for the elongation reactions to produce glycogen. Catalyzes the reaction between ATP and alpha-D-glucose 1-phosphate (G1P) to produce pyrophosphate and ADP-Glc. The sequence is that of Glucose-1-phosphate adenylyltransferase from Shigella dysenteriae serotype 1 (strain Sd197).